The sequence spans 100 residues: Large ribosomal subunit protein bL28 (100 aa).

It belongs to the bacterial ribosomal protein bL28 family.

This is Large ribosomal subunit protein bL28 from Methylobacterium radiotolerans (strain ATCC 27329 / DSM 1819 / JCM 2831 / NBRC 15690 / NCIMB 10815 / 0-1).